The chain runs to 455 residues: Homogentisate 1,2-dioxygenase (455 aa).

Residue His-308 is the Proton acceptor of the active site. 2 residues coordinate Fe cation: His-351 and Glu-357. Homogentisate-binding residues include Tyr-366 and His-387. A Fe cation-binding site is contributed by His-387.

This sequence belongs to the homogentisate dioxygenase family. As to quaternary structure, hexamer; dimer of trimers. Requires Fe cation as cofactor.

It catalyses the reaction homogentisate + O2 = 4-maleylacetoacetate + H(+). The protein operates within amino-acid degradation; L-phenylalanine degradation; acetoacetate and fumarate from L-phenylalanine: step 4/6. Functionally, involved in the catabolism of homogentisate (2,5-dihydroxyphenylacetate or 2,5-OH-PhAc), a central intermediate in the degradation of phenylalanine and tyrosine. Catalyzes the oxidative ring cleavage of the aromatic ring of homogentisate to yield maleylacetoacetate. The protein is Homogentisate 1,2-dioxygenase of Xanthomonas campestris pv. campestris (strain 8004).